The primary structure comprises 452 residues: Probable ECA polymerase (452 aa).

11 helical membrane passes run 6-26, 37-57, 63-83, 118-138, 155-175, 181-201, 207-227, 228-248, 341-361, 378-398, and 410-430; these read FSGLLVVWLLSTLFIATLTWF, VFFSLLFLLTFFFGFPLTSVL, VGVAPPEILLQALLSAACFYG, VILMGIALVSVAIFFMHNGFL, GVALKRFFYFFIPAMLVVYFL, AWLFFLVSTVAFGLLTYMIVG, IIIAFAIFLFIGIIRGWISLW, MLAAAGVLGIVGMFWLALKRY, LVVMGGALFIPLGAIVVGLII, YKAAILHSFCFGAIFNMIVLA, and VFFLVVFGASLLVAKLLFWLF.

Belongs to the WzyE family. Probably part of a complex composed of WzxE, WzyE and WzzE.

It is found in the cell inner membrane. Its pathway is bacterial outer membrane biogenesis; enterobacterial common antigen biosynthesis. In terms of biological role, probably involved in the polymerization of enterobacterial common antigen (ECA) trisaccharide repeat units. The chain is Probable ECA polymerase from Salmonella typhi.